The chain runs to 85 residues: Sodium channel neurotoxin MeuNaTxalpha-1 (85 aa).

The signal sequence occupies residues 1-19; that stretch reads MNSLVMISLALLVMTGVES. Residues 21-83 enclose the LCN-type CS-alpha/beta domain; the sequence is RDGYIADDKN…VPIKVSGKCN (63 aa). Positions 27–31 are specificity module, loop 1; the sequence is DDKNC. Intrachain disulfides connect C31/C82, C35/C55, C41/C65, and C45/C67. Specificity module, loop stretches follow at residues 58–62 and 75–83; these read AGQYG and PIKVSGKCN. Residue N83 is modified to Asparagine amide.

It belongs to the long (4 C-C) scorpion toxin superfamily. Sodium channel inhibitor family. Alpha subfamily. Post-translationally, C-terminal amidation does not appear to play an important role in activity, since the non-amidated recombinant toxin and the native toxin (which is amidated) show similar activities on all sodium channels tested. In terms of tissue distribution, expressed by the venom gland.

It localises to the secreted. In terms of biological role, alpha toxins bind voltage-independently at site-3 of sodium channels (Nav) and inhibit the inactivation of the activated channels, thereby blocking neuronal transmission. This toxin inhibits inactivation of Nav1.6/SCN8A (EC(50)=3.1 uM) and drosophila DmNav1 (EC(50)=1.17 uM). It also shows a weak inhibition of inactivation on Nav1.2/SCN2A Nav1.3/SCN3A, and Nav1.7/SCN9A. The toxin (1 uM) does not significantly shift the midpoint of activation at the two channels, but induces a significant depolarizing shift in the V(1/2) of inactivation of the channels. The toxin has also been shown to dose-dependently stimulates intracellular signaling in DRG neurons through activation of two kinases (type II protein kinase A (PKA-II) and MAP kinases 1/3 (MAPK1/MAPK3)). Nav1.2/SCN2A is strongly suggested to be the target channel predominantly involved in this activation. In vivo, the toxin induces a dose-dependent thermal hyperalgesia lasting 30-45 minutes. The sequence is that of Sodium channel neurotoxin MeuNaTxalpha-1 from Mesobuthus eupeus (Lesser Asian scorpion).